Here is a 572-residue protein sequence, read N- to C-terminus: Phosphoenolpyruvate-protein phosphotransferase (572 aa).

Residue histidine 191 is the Tele-phosphohistidine intermediate of the active site. Residues arginine 298 and arginine 334 each contribute to the phosphoenolpyruvate site. Mg(2+) contacts are provided by glutamate 433 and aspartate 457. Phosphoenolpyruvate is bound by residues asparagine 456–aspartate 457 and arginine 467. The active-site Proton donor is cysteine 504.

Belongs to the PEP-utilizing enzyme family. In terms of assembly, homodimer. It depends on Mg(2+) as a cofactor.

The protein resides in the cytoplasm. It catalyses the reaction L-histidyl-[protein] + phosphoenolpyruvate = N(pros)-phospho-L-histidyl-[protein] + pyruvate. General (non sugar-specific) component of the phosphoenolpyruvate-dependent sugar phosphotransferase system (sugar PTS). This major carbohydrate active-transport system catalyzes the phosphorylation of incoming sugar substrates concomitantly with their translocation across the cell membrane. Enzyme I transfers the phosphoryl group from phosphoenolpyruvate (PEP) to the phosphoryl carrier protein (HPr). The protein is Phosphoenolpyruvate-protein phosphotransferase (ptsI) of Staphylococcus aureus (strain Mu50 / ATCC 700699).